A 233-amino-acid chain; its full sequence is C-type lectin domain family 2 member D5 (233 aa).

A disordered region spans residues 1–52 (MPSSAHLQDPPPLLSRTLTQNEGQTSLRQSSSCGPSAASASESLSGSTESRI). The Cytoplasmic portion of the chain corresponds to 1–76 (MPSSAHLQDP…PLEYPAGLYC (76 aa)). Polar residues predominate over residues 16–29 (RTLTQNEGQTSLRQ). The segment covering 30-50 (SSSCGPSAASASESLSGSTES) has biased composition (low complexity). The helical; Signal-anchor for type II membrane protein transmembrane segment at 77 to 97 (CYVVIIVLSVAVVALSVALSV) threads the bilayer. The Extracellular segment spans residues 98–233 (KKTAQISTIN…KPNSYTSQCL (136 aa)). The C-type lectin domain occupies 119 to 228 (VGNKCFYFNE…KSICRKPNSY (110 aa)). Residue Asn132 is glycosylated (N-linked (GlcNAc...) asparagine).

The protein resides in the cell membrane. In terms of biological role, lectin-type cell surface receptor. The polypeptide is C-type lectin domain family 2 member D5 (Ocil) (Rattus norvegicus (Rat)).